A 411-amino-acid polypeptide reads, in one-letter code: MATINDNYLKLKAGYLFPEIARRVNTFAEAHPEAQIIKLGIGDVTEPLPKACIQAMTKAVAEMGDRSTFKGYGPEQGYAWLREKIAAQDFQGRGCDIDASEIFISDGSKCDSGNILDIIGNNNTIAVTDPVYPVYVDTNVMAGNTGAVNEKGEYEGLVYLPIRAENNFTAEIPTQKVDLIYLCFPNNPTGATATKEYLQTWVNYARANDAIILFDAAYEAFITDASLPHSIYEIEGAKECAIEFRSFSKNAGFTGTRCALTVVPKTLKGKAADGSDVELWKLWNRRQSTKFNGVSYIVQRGAEAVYSEEGKAQVKGLIQFYLENAKIICSQLQAAGLTVYGGVNAPYVWVQTPTGLSSWDFFDKLLQNCNVVGTPGSGFGAAGEGYFRISSFNSRENVNEAMKRITEKFKV.

2 residues coordinate substrate: tyrosine 15 and glycine 42. Residues tyrosine 72, 108-109 (SK), tyrosine 132, asparagine 187, tyrosine 218, and 246-248 (SFS) contribute to the pyridoxal 5'-phosphate site. Substrate-binding residues include lysine 109, tyrosine 132, and asparagine 187. Lysine 249 carries the N6-(pyridoxal phosphate)lysine modification. Pyridoxal 5'-phosphate-binding residues include arginine 257 and asparagine 292. The substrate site is built by asparagine 292 and arginine 388.

It belongs to the class-I pyridoxal-phosphate-dependent aminotransferase family. LL-diaminopimelate aminotransferase subfamily. As to quaternary structure, homodimer. It depends on pyridoxal 5'-phosphate as a cofactor.

The catalysed reaction is (2S,6S)-2,6-diaminopimelate + 2-oxoglutarate = (S)-2,3,4,5-tetrahydrodipicolinate + L-glutamate + H2O + H(+). It functions in the pathway amino-acid biosynthesis; L-lysine biosynthesis via DAP pathway; LL-2,6-diaminopimelate from (S)-tetrahydrodipicolinate (aminotransferase route): step 1/1. Involved in the synthesis of meso-diaminopimelate (m-DAP or DL-DAP), required for both lysine and peptidoglycan biosynthesis. Catalyzes the direct conversion of tetrahydrodipicolinate to LL-diaminopimelate. This is LL-diaminopimelate aminotransferase from Trichodesmium erythraeum (strain IMS101).